Here is a 677-residue protein sequence, read N- to C-terminus: Methionine--tRNA ligase (677 aa).

A 'HIGH' region motif is present at residues 15-25 (PYANGSIHLGH). 4 residues coordinate Zn(2+): C146, C149, C159, and C162. Residues 333-337 (KMSKS) carry the 'KMSKS' region motif. Residue K336 coordinates ATP. One can recognise a tRNA-binding domain in the interval 575–677 (DFAKVDLRVA…AGAKPGHQVK (103 aa)).

It belongs to the class-I aminoacyl-tRNA synthetase family. MetG type 1 subfamily. As to quaternary structure, homodimer. Zn(2+) serves as cofactor.

The protein localises to the cytoplasm. It catalyses the reaction tRNA(Met) + L-methionine + ATP = L-methionyl-tRNA(Met) + AMP + diphosphate. In terms of biological role, is required not only for elongation of protein synthesis but also for the initiation of all mRNA translation through initiator tRNA(fMet) aminoacylation. This is Methionine--tRNA ligase from Escherichia coli (strain SE11).